A 418-amino-acid polypeptide reads, in one-letter code: Staphyloferrin B transporter (418 aa).

A run of 10 helical transmembrane segments spans residues 19-39 (FIAI…MASL), 49-69 (LWSG…SPIW), 88-108 (GLAV…FVLV), 163-183 (ILGF…VCIF), 222-242 (FIIV…ALSP), 257-277 (VIGF…PLWG), 287-307 (SVYI…GLAT), 317-337 (ILQG…VVNA), 353-373 (MLVV…SYTT), and 377-397 (TFIV…CSTI).

Belongs to the major facilitator superfamily.

It localises to the cell membrane. Its function is as follows. Involved in staphyloferrin B secretion. This chain is Staphyloferrin B transporter, found in Staphylococcus aureus (strain NCTC 8325 / PS 47).